Consider the following 188-residue polypeptide: ATP synthase subunit b 1 (188 aa).

A helical membrane pass occupies residues 35–55 (VHFSSHFFWLAISFGFFYLFI).

This sequence belongs to the ATPase B chain family. As to quaternary structure, F-type ATPases have 2 components, F(1) - the catalytic core - and F(0) - the membrane proton channel. F(1) has five subunits: alpha(3), beta(3), gamma(1), delta(1), epsilon(1). F(0) has three main subunits: a(1), b(2) and c(10-14). The alpha and beta chains form an alternating ring which encloses part of the gamma chain. F(1) is attached to F(0) by a central stalk formed by the gamma and epsilon chains, while a peripheral stalk is formed by the delta and b chains.

It is found in the cell inner membrane. Its function is as follows. F(1)F(0) ATP synthase produces ATP from ADP in the presence of a proton or sodium gradient. F-type ATPases consist of two structural domains, F(1) containing the extramembraneous catalytic core and F(0) containing the membrane proton channel, linked together by a central stalk and a peripheral stalk. During catalysis, ATP synthesis in the catalytic domain of F(1) is coupled via a rotary mechanism of the central stalk subunits to proton translocation. In terms of biological role, component of the F(0) channel, it forms part of the peripheral stalk, linking F(1) to F(0). This is ATP synthase subunit b 1 from Bartonella tribocorum (strain CIP 105476 / IBS 506).